The sequence spans 98 residues: NADH-ubiquinone oxidoreductase chain 4L (98 aa).

The next 3 helical transmembrane spans lie at 1–21 (MPII…GMLI), 29–49 (SLLC…LMAL), and 58–78 (IVPI…LALL).

This sequence belongs to the complex I subunit 4L family. In terms of assembly, core subunit of respiratory chain NADH dehydrogenase (Complex I) which is composed of 45 different subunits.

The protein localises to the mitochondrion inner membrane. The enzyme catalyses a ubiquinone + NADH + 5 H(+)(in) = a ubiquinol + NAD(+) + 4 H(+)(out). Functionally, core subunit of the mitochondrial membrane respiratory chain NADH dehydrogenase (Complex I) which catalyzes electron transfer from NADH through the respiratory chain, using ubiquinone as an electron acceptor. Part of the enzyme membrane arm which is embedded in the lipid bilayer and involved in proton translocation. This chain is NADH-ubiquinone oxidoreductase chain 4L (MT-ND4L), found in Nasalis larvatus (Proboscis monkey).